A 464-amino-acid chain; its full sequence is MSTDKTNQSWGGRFSEPVDAFVARFTASVTFDQRLYRHDIMGSIAHATMLAKVGVLTDAERDSIIDGLKTIQGEIEAGSFDWRVDLEDVHMNIEARLTDRIGITGKKLHTGRSRNDQVATDIRLWLRDEIDLILGEITRLQKGLLELAEREAESIMPGFTHLQTAQPVTFGHHMLAWFEMLSRDYERLVDCRKRTNRMPLGSAALAGTTYPIDRELTCQLLGFEAVGGNSLDSVSDRDFAIEFCAAASVAMMHLSRFSEELVLWTSAQFQFIDLPDRFCTGSSIMPQKKNPDVPELVRGKSGRVFGALMGLLTLMKGQPLAYNKDNQEDKEPLFDAADTLRDSLRAFADMIPAIKPKHAIMREAALRGFSTATDLADYLVRRGLPFRDCHEIVGHAVKYGVETGKDLAEMSLEELRKFSDQIEQDVFAVLTLEGSVNARNHIGGTAPAQVRAAVARGQALLASR.

Belongs to the lyase 1 family. Argininosuccinate lyase subfamily.

It is found in the cytoplasm. It catalyses the reaction 2-(N(omega)-L-arginino)succinate = fumarate + L-arginine. Its pathway is amino-acid biosynthesis; L-arginine biosynthesis; L-arginine from L-ornithine and carbamoyl phosphate: step 3/3. The protein is Argininosuccinate lyase of Pseudomonas fluorescens (strain ATCC BAA-477 / NRRL B-23932 / Pf-5).